The chain runs to 245 residues: Complement C1q subcomponent subunit A (245 aa).

An N-terminal signal peptide occupies residues 1-22 (METSQGWLVACVLTMTLVWTVA). Residues 28 to 114 (APNGKDGAPG…NPGNIRDQPR (87 aa)) are disordered. The 79-residue stretch at 31 to 109 (GKDGAPGNPG…KGVKGNPGNI (79 aa)) folds into the Collagen-like domain. 4-hydroxyproline occurs at positions 39 and 45. 5-hydroxylysine is present on Lys48. Lys48 carries an O-linked (Gal...) hydroxylysine; alternate glycan. At Pro54 the chain carries 4-hydroxyproline. A 5-hydroxylysine modification is found at Lys67. The O-linked (Gal...) hydroxylysine; alternate glycan is linked to Lys67. 4-hydroxyproline is present on residues Pro79 and Pro85. Low complexity predominate over residues 79–99 (PGNVGLPGPSGPLGDSGPQGL). Lys100 bears the 5-hydroxylysine mark. Lys100 is a glycosylation site (O-linked (Gal...) hydroxylysine; alternate). The C1q domain maps to 110 to 245 (RDQPRPAFSA…FSGFLIFPSA (136 aa)). An N-linked (GlcNAc...) asparagine glycan is attached at Asn146. Gln199 lines the Ca(2+) pocket.

As to quaternary structure, core component of the complement C1 complex, a calcium-dependent complex composed of 1 molecule of the C1Q subcomplex, 2 molecules of C1R and 2 molecules of C1S. The C1Q subcomplex is composed 18 subunits: 3 chains of C1QA, C1QB, and C1QC trimerize to form 6 collagen-like triple helices connected to six globular ligand-recognition modules (C1q domain). Interacts with CR1 (via Sushi 24 and Sushi 25 domains). Interacts (via C-terminus) with CD33; this interaction activates CD33 inhibitory motifs. O-linked glycans are assumed to be the Glc-Gal disaccharides typically found as secondary modifications of hydroxylated lysines in collagen-like domains.

The protein resides in the secreted. It is found in the cell surface. The C1Q subcomplex is inhibited by sulfated molecules, such as triterpenoid sulfates, heparan sulfate, or chondroitin sulfates. In terms of biological role, core component of the complement C1 complex, a multiprotein complex that initiates the classical pathway of the complement system, a cascade of proteins that leads to phagocytosis and breakdown of pathogens and signaling that strengthens the adaptive immune system. The classical complement pathway is initiated by the C1Q subcomplex of the C1 complex, which specifically binds IgG or IgM immunoglobulins complexed with antigens, forming antigen-antibody complexes on the surface of pathogens: C1QA, together with C1QB and C1QC, specifically recognizes and binds the Fc regions of IgG or IgM via its C1q domain. Immunoglobulin-binding activates the proenzyme C1R, which cleaves C1S, initiating the proteolytic cascade of the complement system. The C1Q subcomplex is activated by a hexamer of IgG complexed with antigens, while it is activated by a pentameric IgM. The C1Q subcomplex also recognizes and binds phosphatidylserine exposed on the surface of cells undergoing programmed cell death, possibly promoting activation of the complement system. The protein is Complement C1q subcomponent subunit A of Mus musculus (Mouse).